Reading from the N-terminus, the 126-residue chain is uncharacterized protein (126 aa).

The next 3 helical transmembrane spans lie at Leu4–Leu24, Ala42–Pro62, and Ile64–Val84.

It is found in the membrane. This is an uncharacterized protein from Saccharomyces cerevisiae (strain ATCC 204508 / S288c) (Baker's yeast).